Here is a 599-residue protein sequence, read N- to C-terminus: Cytochrome P450 monooxygenase ALT8 (599 aa).

2 helical membrane-spanning segments follow: residues leucine 4–glycine 21 and isoleucine 36–phenylalanine 56. Asparagine 127 carries N-linked (GlcNAc...) asparagine glycosylation. Residues aspartate 495 to phenylalanine 504 show a composition bias toward low complexity. The disordered stretch occupies residues aspartate 495–serine 522. Heme is bound at residue cysteine 539.

It belongs to the cytochrome P450 family. Heme serves as cofactor.

It is found in the membrane. The protein operates within secondary metabolite biosynthesis. Functionally, cytochrome P450 monooxygenase; part of the gene cluster that mediates the biosynthesis of the host-selective toxins (HSTs) AAL-toxins, sphinganine-analog mycotoxins responsible for Alternaria stem canker on tomato by the tomato pathotype. The biosynthesis starts with the polyketide synthase ALT1-catalyzed C-16 carbon chain assembly from one starter acetyl-CoA unit with malonyl-CoA extender units. ALT1 also selectively transfers methyl groups at the first and the third cycle of chain elongation for AAL toxin. The C-16 polyketide chain is released from the enzyme by a nucleophilic attack of a carbanion, which is derived from R-carbon of glycin by decarboxylation, on the carbonyl carbon of polyketide acyl chain. This step is probably catalyzed by a pyridoxal 5'-phosphate-dependent aminoacyl transferase ALT4. The respective functions of the other enzymes encoded by the cluster have still to be elucidated. The sphingosine N-acyltransferase-like protein ALT7 seems not to act as a resistance/self-tolerance factor against the toxin in the toxin biosynthetic gene cluster, contrary to what is expected. The sequence is that of Cytochrome P450 monooxygenase ALT8 from Alternaria alternata (Alternaria rot fungus).